Reading from the N-terminus, the 540-residue chain is MLO protein homolog 1 (540 aa).

At 1–16 (MAGGRSGSRELPETPT) the chain is on the extracellular side. The helical transmembrane segment at 17–37 (WAVAVVCAVLVLVSVAMEHGL) threads the bilayer. Residues 38-60 (HNLSHWFRRRQKKAMGDALDKIK) are Cytoplasmic-facing. A helical membrane pass occupies residues 61-81 (AELMLLGFISLLLTVAQAPIS). The Extracellular segment spans residues 82-142 (KICIPKSAAN…MSAKSMHQLH (61 aa)). A helical membrane pass occupies residues 143 to 163 (IFIFVLAVFHVTYCVITMGLG). Residues 164–265 (RLKMKKWKKW…IKRSLEDDFK (102 aa)) lie on the Cytoplasmic side of the membrane. A helical membrane pass occupies residues 266–286 (VVVGISLPLWFVGILVLFLDI). A topological domain (extracellular) is located at residue His287. A helical transmembrane segment spans residues 288–308 (GLGTLIWISFVPLIIVLLVGT). The Cytoplasmic portion of the chain corresponds to 309–347 (KLEMVIMQMAQEIQDRATVIQGAPVVEPSNKYFWFNRPD). Residues 348-368 (WVLFFIHLTLFHNAFQMAHFV) form a helical membrane-spanning segment. Residues 369–383 (WTMATPGLKKCFHEN) are Extracellular-facing. A helical membrane pass occupies residues 384-404 (IWLSIVEVIVGISLQVLCSYI). The Cytoplasmic segment spans residues 405 to 540 (TFPLYALVTQ…DSDFSFSAQR (136 aa)). A calmodulin-binding region spans residues 426 to 447 (EQTMKALMNWRKKAMEKKKVRD). The tract at residues 468 to 526 (ASPVHLLQDHRARSDDPPSPITVASPPAPEEDIYPVPAAAASRQLLDDPPDRRWMASSS) is disordered. Composition is skewed to basic and acidic residues over residues 474–483 (LQDHRARSDD) and 512–521 (LLDDPPDRRW).

This sequence belongs to the MLO family.

The protein resides in the membrane. Its function is as follows. May be involved in modulation of pathogen defense and leaf cell death. Activity seems to be regulated by Ca(2+)-dependent calmodulin binding and seems not to require heterotrimeric G proteins. This Oryza sativa subsp. japonica (Rice) protein is MLO protein homolog 1 (MLO1).